The following is a 230-amino-acid chain: MCGNNMSTPLPAIVPAARKATAAVIFLHGLGDTGHGWAEAFAGIRSSHIKYICPHAPVRPVTLNMNVAMPSWFDIIGLSPDSQEDESGIKQAAENIKALIDQEVKNGIPSNRIILGGFSQGGALSLYTALTTQQKLAGVTALSCWLPLRASFPQGPIGGANRDISILQCHGDCDPLVPLMFGSLTVEKLKTLVNPANVTFKTYEGMMHSSCQQEMMDVKQFIDKLLPPID.

Catalysis depends on charge relay system residues Ser119, Asp174, and His208. At Lys224 the chain carries N6-acetyllysine.

It belongs to the AB hydrolase superfamily. AB hydrolase 2 family. As to quaternary structure, homodimer. Platelets.

The protein resides in the cytoplasm. Its subcellular location is the cell membrane. The protein localises to the nucleus membrane. It is found in the endoplasmic reticulum. It catalyses the reaction S-hexadecanoyl-L-cysteinyl-[protein] + H2O = L-cysteinyl-[protein] + hexadecanoate + H(+). The catalysed reaction is 1-hexadecanoyl-sn-glycero-3-phosphocholine + H2O = sn-glycerol 3-phosphocholine + hexadecanoate + H(+). It carries out the reaction a 1-(9Z-octadecenoyl)-2-acyl-sn-glycero-3-phosphocholine + H2O = a 2-acyl-sn-glycero-3-phosphocholine + (9Z)-octadecenoate + H(+). With respect to regulation, inhibited by palmostatin-B, leading to impair depalmitoylating of Ras. In terms of biological role, acts as an acyl-protein thioesterase. Hydrolyzes fatty acids from S-acylated cysteine residues in proteins such as trimeric G alpha proteins or HRAS. Acts as a palmitoyl thioesterase that catalyzes depalmitoylation of proteins, such as ADRB2, KCNMA1 and SQSTM1. Acts as a negative regulator of autophagy by mediating palmitoylation of SQSTM1, decreasing affinity between SQSTM1 and ATG8 proteins and recruitment of ubiquitinated cargo proteins to autophagosomes. Acts as a lysophospholipase and hydrolyzes lysophosphatidylcholine (lyso-PC). Also hydrolyzes lysophosphatidylethanolamine (lyso-PE), lysophosphatidylinositol (lyso-PI) and lysophosphatidylserine (lyso-PS). Has much higher thioesterase activity than lysophospholipase activity. Contributes to the production of lysophosphatidic acid (LPA) during blood coagulation by recognizing and cleaving plasma phospholipids to generate lysophospholipids which in turn act as substrates for ENPP2 to produce LPA. The protein is Acyl-protein thioesterase 1 (LYPLA1) of Homo sapiens (Human).